The primary structure comprises 677 residues: Methionine--tRNA ligase (677 aa).

The 'HIGH' region motif lies at 15 to 25 (PYANGSIHLGH). The Zn(2+) site is built by cysteine 146, cysteine 149, cysteine 159, and cysteine 162. The 'KMSKS' region signature appears at 333 to 337 (KMSKS). An ATP-binding site is contributed by lysine 336. The 103-residue stretch at 575-677 (DFAKIDLRVA…SGAKPGQQVK (103 aa)) folds into the tRNA-binding domain.

It belongs to the class-I aminoacyl-tRNA synthetase family. MetG type 1 subfamily. In terms of assembly, homodimer. Zn(2+) is required as a cofactor.

Its subcellular location is the cytoplasm. The enzyme catalyses tRNA(Met) + L-methionine + ATP = L-methionyl-tRNA(Met) + AMP + diphosphate. In terms of biological role, is required not only for elongation of protein synthesis but also for the initiation of all mRNA translation through initiator tRNA(fMet) aminoacylation. The protein is Methionine--tRNA ligase of Cronobacter sakazakii (strain ATCC BAA-894) (Enterobacter sakazakii).